Reading from the N-terminus, the 441-residue chain is EP1-like glycoprotein 3 (441 aa).

The signal sequence occupies residues 1–22; that stretch reads MKFSITLALCFTLSIFLIGSQA. Residues 29-159 form the Bulb-type lectin domain; the sequence is QFRVVNEGGY…SGKFVWQSFD (131 aa). N-linked (GlcNAc...) asparagine glycans are attached at residues asparagine 102, asparagine 258, and asparagine 269. The WD repeat unit spans residues 254–296; the sequence is GSKFNVSTFLSRPKHNATLSFIRLESDGNIRVWSYSTLATSTA. The PAN domain maps to 356-433; it reads CDPKTFHYFK…SSLVAYVKAP (78 aa). 2 cysteine pairs are disulfide-bonded: cysteine 387–cysteine 409 and cysteine 391–cysteine 397.

In terms of processing, phosphorylated on tyrosine.

Its subcellular location is the secreted. The protein localises to the cell wall. Its function is as follows. May be involved in a cell-to cell programmed cell death (PCD) signaling mechanism. In Arabidopsis thaliana (Mouse-ear cress), this protein is EP1-like glycoprotein 3.